We begin with the raw amino-acid sequence, 301 residues long: Glycine--tRNA ligase alpha subunit (301 aa).

Belongs to the class-II aminoacyl-tRNA synthetase family. Tetramer of two alpha and two beta subunits.

Its subcellular location is the cytoplasm. The catalysed reaction is tRNA(Gly) + glycine + ATP = glycyl-tRNA(Gly) + AMP + diphosphate. The chain is Glycine--tRNA ligase alpha subunit from Bordetella avium (strain 197N).